Here is a 704-residue protein sequence, read N- to C-terminus: DNA-binding protein RFX2 (704 aa).

The tract at residues 1–39 (MQNSEGGADSPASVALRPSAAAPPVPASPQRVLVQAASS) is disordered. Positions 10 to 20 (SPASVALRPSA) are enriched in low complexity. Position 28 is a phosphoserine (Ser-28). The segment at residues 199 to 274 (HLQWLLDNYE…YHYYGIRLKP (76 aa)) is a DNA-binding region (RFX-type winged-helix). The segment at 292 to 334 (QQPMHQKPRYRPAQKTDSLGDSSSHSGLHSTPEQTTAAQNQHH) is disordered. The segment covering 307–334 (TDSLGDSSSHSGLHSTPEQTTAAQNQHH) has biased composition (low complexity). Residue Ser-416 is modified to Phosphoserine.

The protein belongs to the RFX family. In terms of assembly, homodimer; probably only forms homodimers in testis. Heterodimer; heterodimerizes with RFX1 and RFX3.

The protein localises to the nucleus. It is found in the cytoplasm. Its function is as follows. Transcription factor that acts as a key regulator of spermatogenesis. Acts by regulating expression of genes required for the haploid phase during spermiogenesis, such as genes required for cilium assembly and function. Recognizes and binds the X-box, a regulatory motif with DNA sequence 5'-GTNRCC(0-3N)RGYAAC-3' present on promoters. Probably activates transcription of the testis-specific histone gene H1-6. In Pongo abelii (Sumatran orangutan), this protein is DNA-binding protein RFX2 (RFX2).